The chain runs to 383 residues: ATP phosphoribosyltransferase regulatory subunit (383 aa).

The protein belongs to the class-II aminoacyl-tRNA synthetase family. HisZ subfamily. In terms of assembly, heteromultimer composed of HisG and HisZ subunits.

The protein localises to the cytoplasm. It participates in amino-acid biosynthesis; L-histidine biosynthesis; L-histidine from 5-phospho-alpha-D-ribose 1-diphosphate: step 1/9. Required for the first step of histidine biosynthesis. May allow the feedback regulation of ATP phosphoribosyltransferase activity by histidine. The sequence is that of ATP phosphoribosyltransferase regulatory subunit from Paraburkholderia xenovorans (strain LB400).